The chain runs to 95 residues: Large ribosomal subunit protein bL27 (95 aa).

A disordered region spans residues 1-25 (MAHKKGTGSTRNGRDSNAQRLGVKR). Polar residues predominate over residues 7 to 19 (TGSTRNGRDSNAQ).

The protein belongs to the bacterial ribosomal protein bL27 family.

The sequence is that of Large ribosomal subunit protein bL27 from Gloeobacter violaceus (strain ATCC 29082 / PCC 7421).